A 171-amino-acid chain; its full sequence is MTKQHAYTREDLLRCARGELFGPGNAQLPAPNMLMVDRITHISDVGGKYGKGEMVAELDINPDLWFFACHFEGDPVMPGCLGLDAMWQLVGFYLGWQGNPGRGRALGSGEVKFFGQVLPTAKKLTYNIHIKRTISRSLILGIADGTVSVDGREIYSAEGLRVGLFTSTDSF.

The active site involves H70.

Belongs to the thioester dehydratase family. FabA subfamily. As to quaternary structure, homodimer.

The protein localises to the cytoplasm. The catalysed reaction is a (3R)-hydroxyacyl-[ACP] = a (2E)-enoyl-[ACP] + H2O. It catalyses the reaction (3R)-hydroxydecanoyl-[ACP] = (2E)-decenoyl-[ACP] + H2O. It carries out the reaction (2E)-decenoyl-[ACP] = (3Z)-decenoyl-[ACP]. It functions in the pathway lipid metabolism; fatty acid biosynthesis. Functionally, necessary for the introduction of cis unsaturation into fatty acids. Catalyzes the dehydration of (3R)-3-hydroxydecanoyl-ACP to E-(2)-decenoyl-ACP and then its isomerization to Z-(3)-decenoyl-ACP. Can catalyze the dehydratase reaction for beta-hydroxyacyl-ACPs with saturated chain lengths up to 16:0, being most active on intermediate chain length. The sequence is that of 3-hydroxydecanoyl-[acyl-carrier-protein] dehydratase from Azotobacter vinelandii (strain DJ / ATCC BAA-1303).